Reading from the N-terminus, the 157-residue chain is MGRITSSRSQLIGDPRHHSLLASKFINCLMLDGKKTTAQRVFYDALEEIGKRHEGEETPIEVFEAALENIKPYIEVRSKRVGGASYQVPMQVNKARQQSLAIRWILAAVRDKKGRPMALKLADELLAGFKKEGAAYTKRENTHRMADANKAFAHFAW.

This sequence belongs to the universal ribosomal protein uS7 family. Part of the 30S ribosomal subunit. Contacts proteins S9 and S11.

Its function is as follows. One of the primary rRNA binding proteins, it binds directly to 16S rRNA where it nucleates assembly of the head domain of the 30S subunit. Is located at the subunit interface close to the decoding center, probably blocks exit of the E-site tRNA. The chain is Small ribosomal subunit protein uS7 from Rhodopirellula baltica (strain DSM 10527 / NCIMB 13988 / SH1).